A 544-amino-acid chain; its full sequence is Dynein axonemal assembly factor 3 (544 aa).

Disordered stretches follow at residues 328-350 and 448-544; these read RAAEGDPEQVQGGAEGSSEPAAP and TFAR…YPIP. Polar residues predominate over residues 522–536; that stretch reads PTGSQAPKSENQTVP.

It belongs to the DNAAF3 family.

Its subcellular location is the cytoplasm. The protein resides in the dynein axonemal particle. In terms of biological role, required for the assembly of axonemal inner and outer dynein arms. Involved in preassembly of dyneins into complexes before their transport into cilia. The sequence is that of Dynein axonemal assembly factor 3 (DNAAF3) from Bos taurus (Bovine).